We begin with the raw amino-acid sequence, 287 residues long: MLRILTLSILATSKLASAHVVAWHPGMYCLGGNDTSVDDPNTNLAVNPLWDLPKSKWWFQADRGCDKAPPVDGVFLELPAGQNFTTELAHNRAQTTLSFNGQYAGEWPDGKDHPEDWSGTGTPPGCIQDDGAIHTNNQTMAGGTVFAISYQSDMSQVTMENLVVFSVLEHTPWKRIATYEVPADLPPCPDAGCICAWGWVPQGCGEPNMYMAGYKCKVTGSSSTKQLAQAQVPKYCANDTSECVGGAKQILVMNQADGNNVVAPDNDFVAYNEKWGFQNGAQNDIFM.

Residues 1-18 (MLRILTLSILATSKLASA) form the signal peptide. Residues N33, N83, and N137 are each glycosylated (N-linked (GlcNAc...) asparagine). Cystine bridges form between C188-C193, C195-C216, and C236-C243. N238 carries an N-linked (GlcNAc...) asparagine glycan.

It belongs to the polysaccharide monooxygenase AA14 family. It depends on Cu(2+) as a cofactor.

It localises to the secreted. Its function is as follows. Lytic polysaccharide monooxygenase (LPMO) that has a broad substrate specificity with strong oxidative activity on pure amorphous cellulose and xyloglucan and plays as a bifunctional enzyme to decompose some specific network structures formed between cellulose and hemicellulose in the plant cell walls. Catalysis by LPMOs requires the reduction of the active-site copper from Cu(II) to Cu(I) by a reducing agent and H(2)O(2) or O(2) as a cosubstrate. Simultaneously oxidizes cellulose, xylan and xyloglucan in natural hemi/cellulosic substrate such as fibrillated eucalyptus pulp, and releases native and oxidized cello-oligosaccharides, xylo-oligosaccharides and xyloglucan oligosaccharides from this substrate. The cellulolytic/hemicellulolytic activity becomes weaker as the contents of xylan increase in the alkaline-extracted hemi/cellulosic substrates. The protein is AA14 family lytic polysaccharide monooxygenase A of Talaromyces rugulosus (Penicillium rugulosum).